The following is a 96-amino-acid chain: Putative pterin-4-alpha-carbinolamine dehydratase (96 aa).

It belongs to the pterin-4-alpha-carbinolamine dehydratase family.

The catalysed reaction is (4aS,6R)-4a-hydroxy-L-erythro-5,6,7,8-tetrahydrobiopterin = (6R)-L-erythro-6,7-dihydrobiopterin + H2O. The protein is Putative pterin-4-alpha-carbinolamine dehydratase of Rhodospirillum rubrum (strain ATCC 11170 / ATH 1.1.1 / DSM 467 / LMG 4362 / NCIMB 8255 / S1).